A 290-amino-acid polypeptide reads, in one-letter code: GTPase Era (290 aa).

The Era-type G domain occupies 2–169 (KSGFVSIIGR…KDKIYENLQE (168 aa)). Residues 10–17 (GRPSTGKS) are G1. GTP is bound at residue 10-17 (GRPSTGKS). A G2 region spans residues 36–40 (QTTRN). Positions 57-60 (DTPG) are G3. Residues 57–61 (DTPGF) and 119–122 (NKID) contribute to the GTP site. Positions 119–122 (NKID) are G4. The segment at 148-150 (ISA) is G5. The KH type-2 domain maps to 200–276 (LKEELPYSLY…DLFLQVKLRK (77 aa)).

The protein belongs to the TRAFAC class TrmE-Era-EngA-EngB-Septin-like GTPase superfamily. Era GTPase family. In terms of assembly, monomer.

The protein resides in the cytoplasm. It is found in the cell inner membrane. An essential GTPase that binds both GDP and GTP, with rapid nucleotide exchange. Plays a role in 16S rRNA processing and 30S ribosomal subunit biogenesis and possibly also in cell cycle regulation and energy metabolism. This is GTPase Era from Borrelia turicatae (strain 91E135).